Reading from the N-terminus, the 129-residue chain is Large ribosomal subunit protein bL12 (129 aa).

The protein belongs to the bacterial ribosomal protein bL12 family. Homodimer. Part of the ribosomal stalk of the 50S ribosomal subunit. Forms a multimeric L10(L12)X complex, where L10 forms an elongated spine to which 2 to 4 L12 dimers bind in a sequential fashion. Binds GTP-bound translation factors.

Functionally, forms part of the ribosomal stalk which helps the ribosome interact with GTP-bound translation factors. Is thus essential for accurate translation. This Maridesulfovibrio salexigens (strain ATCC 14822 / DSM 2638 / NCIMB 8403 / VKM B-1763) (Desulfovibrio salexigens) protein is Large ribosomal subunit protein bL12.